Consider the following 377-residue polypeptide: Histone deacetylase 8 (377 aa).

The segment at 14–324 (LVPVYIYSPE…WTYLTGVILG (311 aa)) is histone deacetylase. A Phosphoserine modification is found at Ser39. Asp101 lines the substrate pocket. Catalysis depends on His143, which acts as the Proton acceptor. Gly151 lines the substrate pocket. A divalent metal cation contacts are provided by Asp178, His180, and Asp267. Tyr306 serves as a coordination point for substrate.

Belongs to the histone deacetylase family. HD type 1 subfamily. As to quaternary structure, interacts with PEPB2-MYH11, a fusion protein consisting of the 165 N-terminal residues of CBF-beta (PEPB2) with the tail region of MYH11 produced by the inversion Inv(16)(p13q22), a translocation associated with acute myeloid leukemia of M4EO subtype. The PEPB2-MYH1 fusion protein also interacts with RUNX1, a well known transcriptional regulator, suggesting that the interaction with HDAC8 may participate in the conversion of RUNX1 into a constitutive transcriptional repressor. Interacts with CBFA2T3. Interacts with phosphorylated SMG5/EST1B; this interaction protects SMG5 from ubiquitin-mediated degradation. Associates with alpha-SMA (smooth muscle alpha-actin). A divalent metal cation serves as cofactor. In terms of processing, phosphorylated by PKA on serine 39. Phosphorylation reduces deacetylase activity observed preferentially on histones H3 and H4. As to expression, weakly expressed in most tissues. Expressed at higher level in heart, brain, kidney and pancreas and also in liver, lung, placenta, prostate and kidney.

It localises to the nucleus. The protein localises to the chromosome. The protein resides in the cytoplasm. The catalysed reaction is N(6)-acetyl-L-lysyl-[histone] + H2O = L-lysyl-[histone] + acetate. It catalyses the reaction N(6)-acetyl-L-lysyl-[protein] + H2O = L-lysyl-[protein] + acetate. The enzyme catalyses N(6)-(2E)-butenoyl-L-lysyl-[protein] + H2O = (2E)-2-butenoate + L-lysyl-[protein]. Its activity is regulated as follows. Its activity is inhibited by trichostatin A (TSA), suberoylanilide hydroxamic acid (SAHA), 3-(1-methyl-4-phenylacetyl-1H-2-pyrrolyl)-N-hydroxy-2-propenamide (APHA), 4-dimethylamino-N-(6-hydroxycarbamoyethyl)benzamide-N-hydroxy-7-(4-dimethylaminobenzoyl)aminoheptanamide (MS-344), 5-(4-methyl-benzoylamino)-biphenyl-3,4'-dicarboxylic acid 3-dimethylamide 4'-hydroxyamide (CRA-A) and butyrate. Histone deacetylase that catalyzes the deacetylation of lysine residues on the N-terminal part of the core histones (H2A, H2B, H3 and H4). Histone deacetylation gives a tag for epigenetic repression and plays an important role in transcriptional regulation, cell cycle progression and developmental events. Histone deacetylases act via the formation of large multiprotein complexes. Also involved in the deacetylation of cohesin complex protein SMC3 regulating release of cohesin complexes from chromatin. May play a role in smooth muscle cell contractility. In addition to protein deacetylase activity, also has protein-lysine deacylase activity: acts as a protein decrotonylase by mediating decrotonylation ((2E)-butenoyl) of histones. The sequence is that of Histone deacetylase 8 from Homo sapiens (Human).